A 122-amino-acid chain; its full sequence is LYR motif-containing protein 1 (122 aa).

This sequence belongs to the complex I LYR family.

Functionally, may promote cell proliferation and inhibition of apoptosis of preadipocytes. This is LYR motif-containing protein 1 (Lyrm1) from Rattus norvegicus (Rat).